Here is a 2766-residue protein sequence, read N- to C-terminus: Thyroglobulin (2766 aa).

Residues 1–20 form the signal peptide; it reads MTALVLWVSTLLSSVCLVAA. Tyrosine 25 carries the iodotyrosine; alternate modification. Tyrosine 25 carries the sulfotyrosine; alternate modification. Position 25 is a thyroxine; alternate (tyrosine 25). Tyrosine 25 is modified (triiodothyronine; alternate). Thyroglobulin type-1 domains are found at residues 32 to 93, 94 to 161, 162 to 298, and 299 to 359; these read LRPC…PTVC, LSFC…PTRC, PRSC…RFRC, and PTKC…PPSC. 8 disulfides stabilise this stretch: cysteine 35–cysteine 53, cysteine 64–cysteine 71, cysteine 73–cysteine 93, cysteine 97–cysteine 121, cysteine 132–cysteine 139, cysteine 141–cysteine 161, cysteine 165–cysteine 184, and cysteine 195–cysteine 236. The residue at position 109 (tyrosine 109) is an Iodotyrosine. Asparagine 111 carries an N-linked (GlcNAc...) asparagine glycan. The residue at position 150 (tyrosine 150) is an Iodotyrosine; alternate. Tyrosine 150 is subject to Diiodotyrosine; alternate. Asparagine 199 carries N-linked (GlcNAc...) asparagine glycosylation. Tyrosine 235 and tyrosine 259 each carry iodotyrosine. Intrachain disulfides connect cysteine 302–cysteine 320, cysteine 331–cysteine 337, cysteine 339–cysteine 359, cysteine 365–cysteine 620, cysteine 408–cysteine 608, cysteine 631–cysteine 636, cysteine 638–cysteine 658, cysteine 662–cysteine 687, and cysteine 698–cysteine 703. N-linked (GlcNAc...) asparagine glycans are attached at residues asparagine 484 and asparagine 496. 6 consecutive Thyroglobulin type-1 domains span residues 605-658, 659-726, 727-922, 923-1074, 1075-1146, and 1147-1211; these read AQAC…RPRC, PTKC…AKQC, PSVC…IPAC, PGPC…MPQC, PTNC…SAQC, and PGLC…QPAC. The residue at position 704 (tyrosine 704) is an Iodotyrosine; alternate. Position 704 is a thyroxine; alternate (tyrosine 704). Tyrosine 704 bears the Triiodothyronine; alternate mark. Diiodotyrosine; alternate is present on tyrosine 704. Disulfide bonds link cysteine 705–cysteine 726, cysteine 730–cysteine 763, cysteine 774–cysteine 899, cysteine 901–cysteine 922, cysteine 926–cysteine 1032, cysteine 1043–cysteine 1050, cysteine 1052–cysteine 1074, cysteine 1078–cysteine 1109, cysteine 1127–cysteine 1146, cysteine 1150–cysteine 1170, cysteine 1182–cysteine 1189, cysteine 1191–cysteine 1211, cysteine 1216–cysteine 1265, cysteine 1232–cysteine 1246, cysteine 1306–cysteine 1356, and cysteine 1331–cysteine 1347. The N-linked (GlcNAc...) asparagine glycan is linked to asparagine 748. Tyrosine 785 is modified (iodotyrosine). N-linked (GlcNAc...) asparagine glycosylation occurs at asparagine 817. The residue at position 867 (tyrosine 867) is an Iodotyrosine; alternate. Tyrosine 867 is subject to Diiodotyrosine; alternate. Tyrosine 884 bears the Diiodotyrosine mark. Asparagine 948 is a glycosylation site (N-linked (GlcNAc...) asparagine). Residue tyrosine 993 is modified to Iodotyrosine; alternate. At tyrosine 993 the chain carries Diiodotyrosine; alternate. Asparagine 1141 carries N-linked (GlcNAc...) asparagine glycosylation. The residue at position 1310 (tyrosine 1310) is an Iodotyrosine. Tyrosine 1310 is subject to Thyroxine. Residues asparagine 1349 and asparagine 1365 are each glycosylated (N-linked (GlcNAc...) asparagine). 9 cysteine pairs are disulfide-bonded: cysteine 1441–cysteine 1458, cysteine 1461–cysteine 1472, cysteine 1475–cysteine 1489, cysteine 1492–cysteine 1509, cysteine 1513–cysteine 1522, cysteine 1542–cysteine 1564, cysteine 1602–cysteine 1626, cysteine 1606–cysteine 1612, and cysteine 1638–cysteine 1661. Type II repeat units follow at residues 1455–1468, 1469–1485, and 1486–1502; these read ALGC…SFSQ, DGRC…EQAG, and SSAC…ITTG. The Thyroglobulin type-1 11 domain occupies 1510–1564; it reads VTDCQKNEAGLQCDQNGQYQASQKNRDSGEVFCVDSEGRKLQWLQTEAGLSESQC. One copy of the Type IIIA repeat lies at 1602-1722; the sequence is CLTDCANDEA…GANLTDTHTY (121 aa). Asparagine 1715, asparagine 1729, asparagine 1773, and asparagine 1864 each carry an N-linked (GlcNAc...) asparagine glycan. Disulfide bonds link cysteine 1723/cysteine 1748, cysteine 1727/cysteine 1733, cysteine 1732/cysteine 1834, and cysteine 1759/cysteine 1776. The Type IIIB repeat unit spans residues 1723–1889; that stretch reads CLLACDNDSC…LFSAEQANLW (167 aa). Intrachain disulfides connect cysteine 1890-cysteine 1916, cysteine 1894-cysteine 1901, cysteine 1925-cysteine 1936, cysteine 1993-cysteine 2021, cysteine 1997-cysteine 2003, cysteine 2002-cysteine 2073, and cysteine 2032-cysteine 2045. The Type IIIA repeat unit spans residues 1890–1992; sequence CLSRCAQEPI…GKLISNGFFE (103 aa). The N-linked (GlcNAc...) asparagine glycan is linked to asparagine 1935. A Type IIIB repeat occupies 1993–2125; the sequence is CERLCDRDPC…AATSNFSMAQ (133 aa). An N-linked (GlcNAc...) asparagine glycan is attached at asparagine 2010. N-linked (GlcNAc...) asparagine glycosylation occurs at asparagine 2120. Residues 2126–2183 form a Type IIIA repeat; sequence DFCLQQCSRHQDCLVTTLQIQPGVVRCVFYPDIQNCIHSLRSHTCWLLLHEEATYIYR. Disulfide bonds link cysteine 2128–cysteine 2152, cysteine 2132–cysteine 2138, and cysteine 2161–cysteine 2170. Tyrosine 2182 carries the post-translational modification Iodotyrosine. The interval 2186-2766 is cholinesterase-like (ChEL); it reads GIPLVQSDVT…LEPVPKSYSK (581 aa). Residue asparagine 2249 is glycosylated (N-linked (GlcNAc...) asparagine). Cysteines 2263 and 2280 form a disulfide. N-linked (GlcNAc...) asparagine glycosylation is present at asparagine 2294. The cysteines at positions 2441 and 2452 are disulfide-linked. The residue at position 2539 (tyrosine 2539) is a Thyroxine. Tyrosine 2572 carries the iodotyrosine; alternate modification. Residue tyrosine 2572 is modified to Thyroxine; alternate. Triiodothyronine; alternate is present on tyrosine 2572. Tyrosine 2572 is subject to Diiodotyrosine; alternate. A glycan (N-linked (GlcNAc...) asparagine) is linked at asparagine 2581. Iodotyrosine is present on residues tyrosine 2586 and tyrosine 2616. A disulfide bridge links cysteine 2590 with cysteine 2714. A Diiodotyrosine modification is found at tyrosine 2696. Residues 2729 to 2766 are disordered; the sequence is GAKDAQLTKSEEEDLEVGPGLEEDLSGSLEPVPKSYSK. The span at 2739-2753 shows a compositional bias: acidic residues; sequence EEEDLEVGPGLEEDL. Tyrosine 2764 carries the iodotyrosine; alternate modification. Thyroxine; alternate is present on tyrosine 2764. A Triiodothyronine; alternate modification is found at tyrosine 2764. Residue tyrosine 2764 is modified to Diiodotyrosine; alternate.

The protein belongs to the type-B carboxylesterase/lipase family. As to quaternary structure, monomer. Homodimer (via ChEL region); occurs in the endoplasmic reticulum and is required for export to the Golgi apparatus. Homooligomer; disulfide-linked; stored in this form in the thyroid follicle lumen. Post-translationally, iodinated on tyrosine residues by TPO. There are 4 pairs of iodinated tyrosines used for coupling: acceptor Tyr-25 is coupled to donor Tyr-150 or Tyr-235, acceptor Tyr-2572 is coupled to donor Tyr-2539, acceptor Tyr-2764 in monomer 1 is coupled to donor Tyr-2764 in monomer 2 and acceptor Tyr-1310 in monomer 1 is coupled to donor Tyr-109 in monomer 2. In terms of processing, sulfated tyrosines are desulfated during iodination. Undergoes sequential proteolysis by cathepsins to release thyroxine (T4) and triiodothyronine (T3) hormones. In the thyroid follicle lumen, cross-linked TG (storage form) is solubilized by limited proteolysis mediated by cathepsins CTSB and/or CTSL. Partially cleaved TG is further processed by CTSK/cathepsin K and/or CTSL resulting in the release of T4. Following endocytosis, further processing occurs leading to the release of T3 and more T4 hormones. As to expression, specifically expressed in the thyroid gland.

The protein resides in the secreted. Acts as a substrate for the production of iodinated thyroid hormones thyroxine (T4) and triiodothyronine (T3). The synthesis of T3 and T4 involves iodination of selected tyrosine residues of TG/thyroglobulin followed by their oxidative coupling. Following TG re-internalization and lysosomal-mediated proteolysis, T3 and T4 are released from the polypeptide backbone leading to their secretion into the bloodstream. One dimer produces 7 thyroid hormone molecules. This chain is Thyroglobulin (Tg), found in Mus musculus (Mouse).